The following is a 514-amino-acid chain: uncharacterized protein (514 aa).

Over residues 1 to 15 (MSSPRGASSMSSRSP) the composition is skewed to low complexity. The interval 1 to 22 (MSSPRGASSMSSRSPVNLEPES) is disordered.

This is an uncharacterized protein from Ictaluridae (bullhead catfishes).